Here is a 220-residue protein sequence, read N- to C-terminus: Cell division protein DedD (220 aa).

Residues 9 to 29 (LVGTIVLVALGVIVLPGLLDG) traverse the membrane as a helical segment. Disordered regions lie at residues 46–84 (KAGD…AAPS) and 97–137 (FEPE…EEKA). Low complexity predominate over residues 57 to 70 (PAATQALPTQPPEG). Residues 100–109 (EPAPVAPPKP) show a composition bias toward pro residues. 2 stretches are compositionally biased toward basic and acidic residues: residues 110 to 119 (KPVEPPKPKV) and 127 to 137 (PEPKPVVEEKA). The SPOR domain occupies 138 to 217 (APTGKAYVVQ…SGLSGVVMGY (80 aa)).

The protein belongs to the DedD family.

The protein localises to the cell inner membrane. In terms of biological role, non-essential cell division protein that could be required for efficient cell constriction. The polypeptide is Cell division protein DedD (Escherichia coli (strain K12)).